The primary structure comprises 150 residues: 3-dehydroquinate dehydratase (150 aa).

Tyrosine 26 acts as the Proton acceptor in catalysis. Substrate contacts are provided by asparagine 77, histidine 83, and aspartate 90. The active-site Proton donor is histidine 103. Residues 104–105 and arginine 114 each bind substrate; that span reads LS.

The protein belongs to the type-II 3-dehydroquinase family. Homododecamer.

It carries out the reaction 3-dehydroquinate = 3-dehydroshikimate + H2O. It functions in the pathway metabolic intermediate biosynthesis; chorismate biosynthesis; chorismate from D-erythrose 4-phosphate and phosphoenolpyruvate: step 3/7. In terms of biological role, catalyzes a trans-dehydration via an enolate intermediate. The polypeptide is 3-dehydroquinate dehydratase (Yersinia enterocolitica serotype O:8 / biotype 1B (strain NCTC 13174 / 8081)).